The following is a 244-amino-acid chain: uncharacterized protein (244 aa).

This is an uncharacterized protein from Sulfolobus spindle-shape virus 1 (SSV1).